The sequence spans 162 residues: tRNA (cytidine(34)-2'-O)-methyltransferase (162 aa).

Positions 83, 105, 127, and 135 each coordinate S-adenosyl-L-methionine.

This sequence belongs to the class IV-like SAM-binding methyltransferase superfamily. RNA methyltransferase TrmH family. TrmL subfamily. In terms of assembly, homodimer.

The protein resides in the cytoplasm. The enzyme catalyses cytidine(34) in tRNA + S-adenosyl-L-methionine = 2'-O-methylcytidine(34) in tRNA + S-adenosyl-L-homocysteine + H(+). It catalyses the reaction 5-carboxymethylaminomethyluridine(34) in tRNA(Leu) + S-adenosyl-L-methionine = 5-carboxymethylaminomethyl-2'-O-methyluridine(34) in tRNA(Leu) + S-adenosyl-L-homocysteine + H(+). In terms of biological role, methylates the ribose at the nucleotide 34 wobble position in the two leucyl isoacceptors tRNA(Leu)(CmAA) and tRNA(Leu)(cmnm5UmAA). Catalyzes the methyl transfer from S-adenosyl-L-methionine to the 2'-OH of the wobble nucleotide. This Photorhabdus asymbiotica subsp. asymbiotica (strain ATCC 43949 / 3105-77) (Xenorhabdus luminescens (strain 2)) protein is tRNA (cytidine(34)-2'-O)-methyltransferase.